Consider the following 225-residue polypeptide: Protein-L-isoaspartate O-methyltransferase (225 aa).

Ser75 is an active-site residue.

The protein belongs to the methyltransferase superfamily. L-isoaspartyl/D-aspartyl protein methyltransferase family.

It localises to the cytoplasm. It catalyses the reaction [protein]-L-isoaspartate + S-adenosyl-L-methionine = [protein]-L-isoaspartate alpha-methyl ester + S-adenosyl-L-homocysteine. In terms of biological role, catalyzes the methyl esterification of L-isoaspartyl residues in peptides and proteins that result from spontaneous decomposition of normal L-aspartyl and L-asparaginyl residues. It plays a role in the repair and/or degradation of damaged proteins. The protein is Protein-L-isoaspartate O-methyltransferase of Stenotrophomonas maltophilia (strain R551-3).